The following is an 855-amino-acid chain: Lon protease (855 aa).

The region spanning 45 to 288 (IYLLTVKNVV…ETFRFLNIEY (244 aa)) is the Lon N-terminal domain. Position 439-446 (439-446 (GPPGVGKT)) interacts with ATP. The Lon proteolytic domain maps to 674-855 (IQVPGVVTGL…NEVIDLSIIK (182 aa)). Active-site residues include Ser761 and Lys804.

It belongs to the peptidase S16 family. Homohexamer. Organized in a ring with a central cavity.

The protein resides in the cytoplasm. It carries out the reaction Hydrolysis of proteins in presence of ATP.. ATP-dependent serine protease that mediates the selective degradation of mutant and abnormal proteins as well as certain short-lived regulatory proteins. Required for cellular homeostasis and for survival from DNA damage and developmental changes induced by stress. Degrades polypeptides processively to yield small peptide fragments that are 5 to 10 amino acids long. Binds to DNA in a double-stranded, site-specific manner. This is Lon protease from Karelsulcia muelleri (strain GWSS) (Sulcia muelleri).